The following is a 362-amino-acid chain: MTKRLRAEDDFNPVYPYGYARNQNIPFLTPPFVSSNGFQNFPPGVLSLKLADPITINNQNVSLKVGGGLTLQEETGKLTVNTEPPLHLTNNKLGIALDAPFDVIDNKLTLLAGHGLSIITKETSTLPGLVNTLVVLTGKGIGTDLSNNGGNICVRVGEGGGLSFNDNGDLVAFNKKEDKRTLWTTPDTSPNCRIDQDKDSKLSLVLTKCGSQILANVSLIVVAGRYKIINNNTNPALKGFTIKLLFDKNGVLMESSNLGKSYWNFRNQNSIMSTAYEKAIGFMPNLVAYPKPTTGSKKYARDIVYGNIYLGGKPHQPVTIKTTFNQETGCEYSITFDFSWAKTYVNVEFETTSFTFSYIAQE.

Belongs to the adenoviridae fiber family. In terms of assembly, homotrimer. Interacts with host sialic acid. Interacts (via N-terminal tail region) with pentons.

It localises to the virion. It is found in the host nucleus. Forms spikes that protrude from each vertex of the icosahedral capsid. Interacts with host sialic acid to provide virion initial attachment to target cell. Fiber proteins are shed during virus entry, when virus is still at the cell surface. The protein is Fiber protein of Human adenovirus D serotype 8 (HAdV-8).